Consider the following 206-residue polypeptide: Large ribosomal subunit protein uL4 (206 aa).

The interval 45-76 (RQGTQSAKTRTEVSGGGIKPWRQKGTGRARQG) is disordered.

This sequence belongs to the universal ribosomal protein uL4 family. As to quaternary structure, part of the 50S ribosomal subunit.

Functionally, one of the primary rRNA binding proteins, this protein initially binds near the 5'-end of the 23S rRNA. It is important during the early stages of 50S assembly. It makes multiple contacts with different domains of the 23S rRNA in the assembled 50S subunit and ribosome. In terms of biological role, forms part of the polypeptide exit tunnel. The polypeptide is Large ribosomal subunit protein uL4 (Clostridium acetobutylicum (strain ATCC 824 / DSM 792 / JCM 1419 / IAM 19013 / LMG 5710 / NBRC 13948 / NRRL B-527 / VKM B-1787 / 2291 / W)).